We begin with the raw amino-acid sequence, 143 residues long: Ribonuclease H (143 aa).

Residues 1 to 140 (MKVEIYTDGA…VDALANLGIE (140 aa)) form the RNase H type-1 domain. Mg(2+)-binding residues include Asp-8, Glu-46, Asp-68, and Asp-132.

Belongs to the RNase H family. As to quaternary structure, monomer. Mg(2+) serves as cofactor.

The protein resides in the cytoplasm. It carries out the reaction Endonucleolytic cleavage to 5'-phosphomonoester.. In terms of biological role, endonuclease that specifically degrades the RNA of RNA-DNA hybrids. The protein is Ribonuclease H of Legionella pneumophila (strain Paris).